We begin with the raw amino-acid sequence, 261 residues long: Mite allergen Eur m 3 (261 aa).

The first 18 residues, 1–18, serve as a signal peptide directing secretion; the sequence is MVICNAIIVLLLAFNTLA. A propeptide spanning residues 19–29 is cleaved from the precursor; it reads NPILPSSPNAT. One can recognise a Peptidase S1 domain in the interval 30-260; sequence IVGGQKAKAG…FIDWIDSKRS (231 aa). An intrachain disulfide couples Cys54 to Cys70. Active-site charge relay system residues include His69 and Asp114. 2 cysteine pairs are disulfide-bonded: Cys181/Cys198 and Cys210/Cys236. The Charge relay system role is filled by Ser214.

This sequence belongs to the peptidase S1 family.

Its subcellular location is the secreted. The protein is Mite allergen Eur m 3 (EURM3) of Euroglyphus maynei (Mayne's house dust mite).